The following is an 860-amino-acid chain: Leucine--tRNA ligase (860 aa).

Residues 42–52 (PYPSGRLHMGH) carry the 'HIGH' region motif. The 'KMSKS' region motif lies at 619–623 (KMSKS). Lys-622 is an ATP binding site.

It belongs to the class-I aminoacyl-tRNA synthetase family.

It localises to the cytoplasm. It carries out the reaction tRNA(Leu) + L-leucine + ATP = L-leucyl-tRNA(Leu) + AMP + diphosphate. The sequence is that of Leucine--tRNA ligase from Escherichia coli O127:H6 (strain E2348/69 / EPEC).